The chain runs to 860 residues: Leucine--tRNA ligase (860 aa).

The short motif at 42-52 (PYPSGRLHMGH) is the 'HIGH' region element. The short motif at 619-623 (KMSKS) is the 'KMSKS' region element. Lys622 is an ATP binding site.

The protein belongs to the class-I aminoacyl-tRNA synthetase family.

It localises to the cytoplasm. It catalyses the reaction tRNA(Leu) + L-leucine + ATP = L-leucyl-tRNA(Leu) + AMP + diphosphate. This Salmonella paratyphi B (strain ATCC BAA-1250 / SPB7) protein is Leucine--tRNA ligase.